The following is a 509-amino-acid chain: MMQPSTSTNSIRPVRTRIAPSPTGFPHVGTAYIALFNLAFAKAHGGEFILRIEDTDQTRSTEQSEKMILDALRWVGLDWAEGPDIGGPHAPYRQSERSDIYKKHAEQLIENDHAFRCFCSSEELDAMRAEQMANGETPRYDGRCAHLAAEKTEQLVAEGKPHVIRMRVPTEGVCQVQDMLRGTVEIPWTQVDMQVLLKTDGMPTYHLANVVDDHLMDISHVMRGEEWLNSAPKHQLLYEYFGWEMPVLCHMPLLRNPDKSKLSKRKNPTSITYYRDAGVLPEALLNYLGRMGYSMPDEAEQFTLEEMIASFDIQRVSLGGPIFDIEKLNWLNSEWLRALTPEELKNKILEWASNSDKLTAIAAAIQPRIELLSDAVNWSGFYFQNLPDINAESFTHKSLTPEQIMDMLQLSLWQLEVLPTWSEENIYATLKGLAAHLDIKMRDFMAPFFIAIAGSTSSTPVMNSMAIIGADMTLTRLRHAVDVLGGLGKKKLKKLEKQAAELPDFLAAE.

The short motif at 20 to 30 is the 'HIGH' region element; sequence PSPTGFPHVGT. 4 residues coordinate Zn(2+): C117, C119, C144, and H146. Positions 261–265 match the 'KMSKS' region motif; the sequence is KLSKR. K264 is a binding site for ATP.

This sequence belongs to the class-I aminoacyl-tRNA synthetase family. Glutamate--tRNA ligase type 1 subfamily. Monomer. Requires Zn(2+) as cofactor.

The protein localises to the cytoplasm. It carries out the reaction tRNA(Glu) + L-glutamate + ATP = L-glutamyl-tRNA(Glu) + AMP + diphosphate. Catalyzes the attachment of glutamate to tRNA(Glu) in a two-step reaction: glutamate is first activated by ATP to form Glu-AMP and then transferred to the acceptor end of tRNA(Glu). In Psychrobacter cryohalolentis (strain ATCC BAA-1226 / DSM 17306 / VKM B-2378 / K5), this protein is Glutamate--tRNA ligase.